Reading from the N-terminus, the 488-residue chain is 3-octaprenyl-4-hydroxybenzoate carboxy-lyase (488 aa).

Asn-172 contacts Mn(2+). Prenylated FMN-binding positions include Ile-175 to Arg-177, Arg-189 to Leu-191, and Arg-194 to Gly-195. Glu-238 is a binding site for Mn(2+). The active-site Proton donor is Asp-287.

The protein belongs to the UbiD family. In terms of assembly, homohexamer. Prenylated FMN serves as cofactor. It depends on Mn(2+) as a cofactor.

The protein localises to the cell membrane. The catalysed reaction is a 4-hydroxy-3-(all-trans-polyprenyl)benzoate + H(+) = a 2-(all-trans-polyprenyl)phenol + CO2. Its pathway is cofactor biosynthesis; ubiquinone biosynthesis. Catalyzes the decarboxylation of 3-octaprenyl-4-hydroxy benzoate to 2-octaprenylphenol, an intermediate step in ubiquinone biosynthesis. This Pseudomonas syringae pv. tomato (strain ATCC BAA-871 / DC3000) protein is 3-octaprenyl-4-hydroxybenzoate carboxy-lyase.